Consider the following 550-residue polypeptide: Chaperonin GroEL (550 aa).

Residues 29 to 32, Lys50, 86 to 90, Gly418, and Asp499 each bind ATP; these read TAGP and DGTTT.

It belongs to the chaperonin (HSP60) family. Forms a cylinder of 14 subunits composed of two heptameric rings stacked back-to-back. Interacts with the co-chaperonin GroES.

It localises to the cytoplasm. It catalyses the reaction ATP + H2O + a folded polypeptide = ADP + phosphate + an unfolded polypeptide.. Together with its co-chaperonin GroES, plays an essential role in assisting protein folding. The GroEL-GroES system forms a nano-cage that allows encapsulation of the non-native substrate proteins and provides a physical environment optimized to promote and accelerate protein folding. This is Chaperonin GroEL from Wolbachia sp. subsp. Brugia malayi (strain TRS).